The following is a 301-amino-acid chain: MFFRNLTFFRFPTTTDFSEVDTLLPHALLKPVGALEMNSRGFISPFGREEKELLSHRIAEHLWLTVGGEDKILPAAVVNDLLERKLEEIEEKEGRRPGGRERKRMKDDLLHELLPRAFVKSSRNDAFIDLQHGYVAVDTSSRKTGEYFMSDIRGLLGSFPAMPLNAEVAPRSILTGWIAGEPLPTGLSLGEECEMKDPVEGGAVVKCQHQELRCDEIDKHLDAGKQVTKLALIFEDNLSFVIGDDLIVRKLKFLDGALDQLEHADEDGRRAEFDARFALQSAEIRRLFLLLEEAFKLSKAD.

It belongs to the RdgC family.

The protein resides in the cytoplasm. Its subcellular location is the nucleoid. May be involved in recombination. This is Recombination-associated protein RdgC from Stenotrophomonas maltophilia (strain R551-3).